The chain runs to 501 residues: NAD(P)H-quinone oxidoreductase subunit 2, chloroplastic (501 aa).

Helical transmembrane passes span 15–35 (ILPE…DLTF), 40–60 (TIWL…ILLF), 82–102 (IFQS…IEYI), 107–127 (MAIP…MFLC), 132–152 (LVTI…LCGY), 167–187 (LLIG…LYGL), 212–232 (TFIA…LVPF), 244–264 (PTPV…ALAT), 278–298 (WKIF…LVAI), 307–327 (LAYS…TGDL), 333–353 (MTIY…CIIL), 378–398 (FSLT…GFFG), 410–430 (GFYL…YYYL), and 466–486 (FVMI…NPIF).

This sequence belongs to the complex I subunit 2 family. In terms of assembly, NDH is composed of at least 16 different subunits, 5 of which are encoded in the nucleus.

The protein resides in the plastid. It localises to the chloroplast thylakoid membrane. The catalysed reaction is a plastoquinone + NADH + (n+1) H(+)(in) = a plastoquinol + NAD(+) + n H(+)(out). It catalyses the reaction a plastoquinone + NADPH + (n+1) H(+)(in) = a plastoquinol + NADP(+) + n H(+)(out). Its function is as follows. NDH shuttles electrons from NAD(P)H:plastoquinone, via FMN and iron-sulfur (Fe-S) centers, to quinones in the photosynthetic chain and possibly in a chloroplast respiratory chain. The immediate electron acceptor for the enzyme in this species is believed to be plastoquinone. Couples the redox reaction to proton translocation, and thus conserves the redox energy in a proton gradient. In Marchantia polymorpha (Common liverwort), this protein is NAD(P)H-quinone oxidoreductase subunit 2, chloroplastic.